We begin with the raw amino-acid sequence, 69 residues long: uncharacterized protein (69 aa).

Disordered regions lie at residues 1–32 and 44–69; these read MSAP…GWGD and QSDA…APSD. Basic and acidic residues-rich tracts occupy residues 7–32 and 46–69; these read NLDR…GWGD and DADK…APSD.

This is an uncharacterized protein from Schizosaccharomyces pombe (strain 972 / ATCC 24843) (Fission yeast).